A 591-amino-acid polypeptide reads, in one-letter code: Eukaryotic translation initiation factor 3 subunit D (591 aa).

Residues 100–159 (SGGNPDEDAAFRLVDGKPPPRPKFGPKWRFNPHHNRNQLPQRRDEEVEAKKRDAEKERAR) form a disordered region. Positions 123–135 (FGPKWRFNPHHNR) are enriched in basic residues. The segment covering 140 to 159 (QRRDEEVEAKKRDAEKERAR) has biased composition (basic and acidic residues). The interval 309–323 (QLDLLSVHETSQEPL) is RNA gate. Acidic residues predominate over residues 549 to 560 (DYVEEPLPEDEQ). The tract at residues 549 to 591 (DYVEEPLPEDEQVQPTEENTEGAEASVAATKETEEKKADDAQA) is disordered. A compositionally biased stretch (basic and acidic residues) spans 579–591 (KETEEKKADDAQA).

The protein belongs to the eIF-3 subunit D family. Component of the eukaryotic translation initiation factor 3 (eIF-3) complex, which is composed of at least 13 different subunits.

It localises to the cytoplasm. Its function is as follows. mRNA cap-binding component of the eukaryotic translation initiation factor 3 (eIF-3) complex, which is involved in protein synthesis of a specialized repertoire of mRNAs and, together with other initiation factors, stimulates binding of mRNA and methionyl-tRNAi to the 40S ribosome. The eIF-3 complex specifically targets and initiates translation of a subset of mRNAs involved in cell proliferation. In the eIF-3 complex, eif3d specifically recognizes and binds the 7-methylguanosine cap of a subset of mRNAs. In Arabidopsis thaliana (Mouse-ear cress), this protein is Eukaryotic translation initiation factor 3 subunit D (TIF3D1).